A 219-amino-acid polypeptide reads, in one-letter code: tRNA (guanine-N(7)-)-methyltransferase (219 aa).

S-adenosyl-L-methionine is bound by residues E44, D69, E102, and N125. Residues K129 and D161 each coordinate substrate.

Belongs to the class I-like SAM-binding methyltransferase superfamily. TrmB family.

It carries out the reaction guanosine(46) in tRNA + S-adenosyl-L-methionine = N(7)-methylguanosine(46) in tRNA + S-adenosyl-L-homocysteine. It functions in the pathway tRNA modification; N(7)-methylguanine-tRNA biosynthesis. Its function is as follows. Catalyzes the formation of N(7)-methylguanine at position 46 (m7G46) in tRNA. This chain is tRNA (guanine-N(7)-)-methyltransferase, found in Clostridium perfringens (strain SM101 / Type A).